Consider the following 316-residue polypeptide: Chorismate mutase 3, chloroplastic (316 aa).

Residues 1 to 47 constitute a chloroplast transit peptide; that stretch reads MEAKLLKPAFYNSPNLNLTNSSRLISRLSIWNDKSKVGLSSGSLFLR. Arg-62 provides a ligand contact to L-phenylalanine. Residues 62-316 form the Chorismate mutase domain; sequence RVDESEYLKL…QIEYLLRRLD (255 aa). L-tyrosine is bound by residues Arg-133 and 194-197; that span reads NCGS. 194–197 is an L-phenylalanine binding site; it reads NCGS.

As to quaternary structure, homodimer. As to expression, expressed in roots, stems, cauline leaves, flowers and siliques, and at lower levels in rosette leaves.

Its subcellular location is the plastid. The protein resides in the chloroplast. The catalysed reaction is chorismate = prephenate. It functions in the pathway metabolic intermediate biosynthesis; prephenate biosynthesis; prephenate from chorismate: step 1/1. Allosterically inhibited by tyrosine and phenylalanine. According to another report, seems not to be repressed by tyrosine and phenylalanine. Activated by tryptophan, cysteine and histidine. In terms of biological role, may play a role in chloroplast biogenesis. The polypeptide is Chorismate mutase 3, chloroplastic (Arabidopsis thaliana (Mouse-ear cress)).